Consider the following 832-residue polypeptide: Protein P (832 aa).

The tract at residues 1–177 (MPLSYQHFRK…FCGSPYSWEQ (177 aa)) is terminal protein domain (TP). The spacer stretch occupies residues 178 to 335 (ELQHGAESFN…HCLSHLVNLL (158 aa)). 2 stretches are compositionally biased toward polar residues: residues 205 to 220 (SKHQQSRLGLQPQQGQ) and 251 to 263 (SGHNNNSASESAS). Positions 205-263 (SKHQQSRLGLQPQQGQLAKGQRGRSGSVRSRAHSATRRSVGVEPSGSGHNNNSASESAS) are disordered. The segment at 336-679 (EDWGPCTEHG…YATLYPVARQ (344 aa)) is polymerase/reverse transcriptase domain (RT). Residues 346–589 (KHHIRIPRTP…YSLNFMGYVI (244 aa)) form the Reverse transcriptase domain. Positions 418, 540, and 541 each coordinate Mg(2+).

Belongs to the hepadnaviridae P protein family.

The enzyme catalyses DNA(n) + a 2'-deoxyribonucleoside 5'-triphosphate = DNA(n+1) + diphosphate. It carries out the reaction Endonucleolytic cleavage to 5'-phosphomonoester.. With respect to regulation, activated by host HSP70 and HSP40 in vitro to be able to bind the epsilon loop of the pgRNA. Because deletion of the RNase H region renders the protein partly chaperone-independent, the chaperones may be needed indirectly to relieve occlusion of the RNA-binding site by this domain. Inhibited by several reverse-transcriptase inhibitors: Lamivudine, Adefovir and Entecavir. Functionally, multifunctional enzyme that converts the viral RNA genome into dsDNA in viral cytoplasmic capsids. This enzyme displays a DNA polymerase activity that can copy either DNA or RNA templates, and a ribonuclease H (RNase H) activity that cleaves the RNA strand of RNA-DNA heteroduplexes in a partially processive 3'- to 5'-endonucleasic mode. Neo-synthesized pregenomic RNA (pgRNA) are encapsidated together with the P protein, and reverse-transcribed inside the nucleocapsid. Initiation of reverse-transcription occurs first by binding the epsilon loop on the pgRNA genome, and is initiated by protein priming, thereby the 5'-end of (-)DNA is covalently linked to P protein. Partial (+)DNA is synthesized from the (-)DNA template and generates the relaxed circular DNA (RC-DNA) genome. After budding and infection, the RC-DNA migrates in the nucleus, and is converted into a plasmid-like covalently closed circular DNA (cccDNA). The activity of P protein does not seem to be necessary for cccDNA generation, and is presumably released from (+)DNA by host nuclear DNA repair machinery. This chain is Protein P, found in Gorilla gorilla (western gorilla).